Here is a 605-residue protein sequence, read N- to C-terminus: Elongation factor 4 (605 aa).

The region spanning 11–193 (KRIRNFSIIA…QIVTRISPPQ (183 aa)) is the tr-type G domain. Residues 23–28 (DHGKST) and 140–143 (NKVD) each bind GTP.

It belongs to the TRAFAC class translation factor GTPase superfamily. Classic translation factor GTPase family. LepA subfamily.

Its subcellular location is the cell membrane. The enzyme catalyses GTP + H2O = GDP + phosphate + H(+). Its function is as follows. Required for accurate and efficient protein synthesis under certain stress conditions. May act as a fidelity factor of the translation reaction, by catalyzing a one-codon backward translocation of tRNAs on improperly translocated ribosomes. Back-translocation proceeds from a post-translocation (POST) complex to a pre-translocation (PRE) complex, thus giving elongation factor G a second chance to translocate the tRNAs correctly. Binds to ribosomes in a GTP-dependent manner. This Onion yellows phytoplasma (strain OY-M) protein is Elongation factor 4.